Consider the following 90-residue polypeptide: Mu-theraphotoxin-Phlo1b (90 aa).

The first 22 residues, 1–22 (MKVSVLITLAVLGVMFVWTSAA), serve as a signal peptide directing secretion. Residues 23–50 (EQEDHGSDRRDSPALLKSLGRVFQSEER) constitute a propeptide that is removed on maturation. 3 disulfides stabilise this stretch: Cys-52/Cys-66, Cys-59/Cys-71, and Cys-65/Cys-79. The residue at position 85 (Phe-85) is a Phenylalanine amide. A propeptide spanning residues 86–90 (GNEKS) is cleaved from the precursor.

It belongs to the neurotoxin 10 (Hwtx-1) family. 39 (Jztx-34) subfamily. Expressed by the venom gland.

It localises to the secreted. Functionally, gating-modifier toxin that inhibits voltage-gated sodium channel Nav by shifting the threshold for channel activation to more positive potentials. This toxin moderately inhibits human Nav1.7/SCN9A (IC(50)=360 nM) and weakly inhibits hNav1.2/SCN2A (37% inhibition at 1 uM peptide) and hNav1.5/SCN5A (&lt;20% inhibition at 1 uM peptide). Inhibition of Nav1.7 is voltage-dependent, with lower inhibition at more positive test pulses. The polypeptide is Mu-theraphotoxin-Phlo1b (Phlogius sp. (Tarantula spider)).